The primary structure comprises 624 residues: Probable pectinesterase/pectinesterase inhibitor 47 (624 aa).

An N-terminal signal peptide occupies residues 1-19 (MQTHSSSLVFLALLCLSWA). The disordered stretch occupies residues 24–88 (PTRPPSQPPS…PSPLPPNIAC (65 aa)). Positions 25–84 (TRPPSQPPSHPPIQPSSQPPTQPPSQPPTQPPTQPPSHPPTQPPTPPPSQSPSQPSPLPP) are enriched in pro residues. Residues 74–236 (QSPSQPSPLP…TRLYSVSLGL (163 aa)) form a pectinesterase inhibitor 47 region. Residues Asn225, Asn330, Asn369, and Asn376 are each glycosylated (N-linked (GlcNAc...) asparagine). Residues 307-606 (AVTVGPYETD…FTVYNFTLGD (300 aa)) are pectinesterase 47. Thr385 is a substrate binding site. N-linked (GlcNAc...) asparagine glycosylation is present at Asn387. Gln415 is a binding site for substrate. Asp438 serves as the catalytic Proton donor; for pectinesterase activity. Cys452 and Cys472 are joined by a disulfide. Asp459 functions as the Nucleophile; for pectinesterase activity in the catalytic mechanism. A glycan (N-linked (GlcNAc...) asparagine) is linked at Asn505. Residues Arg527 and Trp529 each coordinate substrate. N-linked (GlcNAc...) asparagine glycosylation is found at Asn555, Asn596, and Asn601.

This sequence in the N-terminal section; belongs to the PMEI family. In the C-terminal section; belongs to the pectinesterase family.

Its subcellular location is the secreted. It is found in the cell wall. The enzyme catalyses [(1-&gt;4)-alpha-D-galacturonosyl methyl ester](n) + n H2O = [(1-&gt;4)-alpha-D-galacturonosyl](n) + n methanol + n H(+). It functions in the pathway glycan metabolism; pectin degradation; 2-dehydro-3-deoxy-D-gluconate from pectin: step 1/5. Acts in the modification of cell walls via demethylesterification of cell wall pectin. The protein is Probable pectinesterase/pectinesterase inhibitor 47 (PME47) of Arabidopsis thaliana (Mouse-ear cress).